Here is a 495-residue protein sequence, read N- to C-terminus: Bifunctional protein GlmU (495 aa).

Positions 1-241 are pyrophosphorylase; the sequence is MPQQTAVVVL…AAKVTGVNDR (241 aa). Residues 10-13, lysine 24, glutamine 81, and 86-87 each bind UDP-N-acetyl-alpha-D-glucosamine; these read LAAG and GT. Aspartate 112 lines the Mg(2+) pocket. 4 residues coordinate UDP-N-acetyl-alpha-D-glucosamine: glycine 151, glutamate 166, asparagine 181, and asparagine 239. Residue asparagine 239 participates in Mg(2+) binding. Residues 242 to 262 form a linker region; sequence VQLSIATRTMNRYILERHMRA. The tract at residues 263 to 495 is N-acetyltransferase; it reads GVTIIDPAST…QATEQKDGEQ (233 aa). UDP-N-acetyl-alpha-D-glucosamine is bound by residues arginine 344 and lysine 362. The active-site Proton acceptor is the histidine 374. Positions 377 and 388 each coordinate UDP-N-acetyl-alpha-D-glucosamine. Acetyl-CoA is bound by residues alanine 391, 397–398, serine 416, and alanine 434; that span reads NY. The segment at 467–495 is disordered; sequence GTAAATAAAQALAADEKSSQATEQKDGEQ. A compositionally biased stretch (low complexity) spans 468 to 479; it reads TAAATAAAQALA. Basic and acidic residues predominate over residues 480 to 495; it reads ADEKSSQATEQKDGEQ.

This sequence in the N-terminal section; belongs to the N-acetylglucosamine-1-phosphate uridyltransferase family. The protein in the C-terminal section; belongs to the transferase hexapeptide repeat family. Homotrimer. Requires Mg(2+) as cofactor.

Its subcellular location is the cytoplasm. The catalysed reaction is alpha-D-glucosamine 1-phosphate + acetyl-CoA = N-acetyl-alpha-D-glucosamine 1-phosphate + CoA + H(+). It catalyses the reaction N-acetyl-alpha-D-glucosamine 1-phosphate + UTP + H(+) = UDP-N-acetyl-alpha-D-glucosamine + diphosphate. Its pathway is nucleotide-sugar biosynthesis; UDP-N-acetyl-alpha-D-glucosamine biosynthesis; N-acetyl-alpha-D-glucosamine 1-phosphate from alpha-D-glucosamine 6-phosphate (route II): step 2/2. It participates in nucleotide-sugar biosynthesis; UDP-N-acetyl-alpha-D-glucosamine biosynthesis; UDP-N-acetyl-alpha-D-glucosamine from N-acetyl-alpha-D-glucosamine 1-phosphate: step 1/1. The protein operates within bacterial outer membrane biogenesis; LPS lipid A biosynthesis. Catalyzes the last two sequential reactions in the de novo biosynthetic pathway for UDP-N-acetylglucosamine (UDP-GlcNAc). The C-terminal domain catalyzes the transfer of acetyl group from acetyl coenzyme A to glucosamine-1-phosphate (GlcN-1-P) to produce N-acetylglucosamine-1-phosphate (GlcNAc-1-P), which is converted into UDP-GlcNAc by the transfer of uridine 5-monophosphate (from uridine 5-triphosphate), a reaction catalyzed by the N-terminal domain. In Nocardia farcinica (strain IFM 10152), this protein is Bifunctional protein GlmU.